Here is a 606-residue protein sequence, read N- to C-terminus: Leucine-rich repeat and immunoglobulin-like domain-containing nogo receptor-interacting protein 1 (606 aa).

Residues 1–27 (MILQLPSCLCPILLIVVGSILSGSASG) form the signal peptide. Intrachain disulfides connect Cys28/Cys34 and Cys32/Cys43. Residues 28 to 57 (CPQRCDCSPQDRSVLCHRKRYLDVPEGIPT) form the LRRNT domain. Topologically, residues 28 to 547 (CPQRCDCSPQ…FDIKTLIIAT (520 aa)) are extracellular. LRR repeat units follow at residues 58 to 79 (DTRL…EFSA), 82 to 103 (YLEE…AFNG), 106 to 127 (NLRS…VFTG), 130 to 151 (NLTQ…MFQD), 154 to 175 (NLKS…AFRG), 178 to 199 (SLEE…ALSH), 202 to 223 (GLIT…SFKR), 250 to 271 (NLTS…AIRH), 274 to 295 (YLRF…MLYE), 298 to 319 (RLQE…AFRG), and 322 to 343 (HLKV…SFHS). Asn130 carries an N-linked (GlcNAc...) asparagine glycan. N-linked (GlcNAc...) asparagine glycosylation occurs at Asn188. Residues Asn250, Asn260, and Asn279 are each glycosylated (N-linked (GlcNAc...) asparagine). N-linked (GlcNAc...) asparagine glycans are attached at residues Asn327, Asn374, Asn478, Asn491, Asn512, Asn523, and Asn528. Positions 355 to 409 (NPLACDCRLLWIFRRRWRLNFSRQQPSCSSPEYVQGKEFKDFPDVLQPNYFTCRR) constitute an LRRCT domain. 3 cysteine pairs are disulfide-bonded: Cys359–Cys382, Cys361–Cys407, and Cys432–Cys483. The Ig-like C2-type domain maps to 397 to 496 (PDVLQPNYFT…NAGGNDTSLA (100 aa)). A helical transmembrane segment spans residues 548–568 (TMGFISFLGVVLFCLVLLFLW). Over 569–606 (SRGKGNTKHNIEIEYVPRKSDAGLSSADAPRKFNMKMI) the chain is Cytoplasmic.

Its subcellular location is the cell membrane. In terms of biological role, may play a role in regulating axonal regeneration and plasticity in the adult central nervous system. The chain is Leucine-rich repeat and immunoglobulin-like domain-containing nogo receptor-interacting protein 1 (lingo1) from Xenopus tropicalis (Western clawed frog).